The following is a 463-amino-acid chain: Phosphomannomutase/phosphoglucomutase (463 aa).

Ser-108 serves as the catalytic Phosphoserine intermediate. Residues Ser-108, Asp-242, Asp-244, and Asp-246 each coordinate Mg(2+). Substrate is bound by residues Glu-325, Ser-327, and His-329.

This sequence belongs to the phosphohexose mutase family. As to quaternary structure, monomer. Mg(2+) serves as cofactor.

It carries out the reaction alpha-D-mannose 1-phosphate = D-mannose 6-phosphate. The enzyme catalyses alpha-D-glucose 1-phosphate = alpha-D-glucose 6-phosphate. Its pathway is nucleotide-sugar biosynthesis; GDP-alpha-D-mannose biosynthesis; alpha-D-mannose 1-phosphate from D-fructose 6-phosphate: step 2/2. It functions in the pathway bacterial outer membrane biogenesis; lipopolysaccharide biosynthesis. In terms of biological role, the phosphomannomutase activity produces a precursor for alginate polymerization. The alginate layer causes a mucoid phenotype and provides a protective barrier against host immune defenses and antibiotics. Also involved in core-LPS biosynthesis due to its phosphoglucomutase activity. Essential for biofilm production. In Pseudomonas putida (strain ATCC 47054 / DSM 6125 / CFBP 8728 / NCIMB 11950 / KT2440), this protein is Phosphomannomutase/phosphoglucomutase (algC).